The primary structure comprises 244 residues: Adenosylcobinamide-GDP ribazoletransferase (244 aa).

A run of 5 helical transmembrane segments spans residues 31 to 51, 55 to 75, 109 to 129, 133 to 153, and 188 to 208; these read LLCY…ASHL, APAP…SGAL, IAVV…WVLV, AGAL…GLFL, and LLLG…VFLW.

The protein belongs to the CobS family. It depends on Mg(2+) as a cofactor.

The protein resides in the cell inner membrane. It catalyses the reaction alpha-ribazole + adenosylcob(III)inamide-GDP = adenosylcob(III)alamin + GMP + H(+). The enzyme catalyses alpha-ribazole 5'-phosphate + adenosylcob(III)inamide-GDP = adenosylcob(III)alamin 5'-phosphate + GMP + H(+). It functions in the pathway cofactor biosynthesis; adenosylcobalamin biosynthesis; adenosylcobalamin from cob(II)yrinate a,c-diamide: step 7/7. Its function is as follows. Joins adenosylcobinamide-GDP and alpha-ribazole to generate adenosylcobalamin (Ado-cobalamin). Also synthesizes adenosylcobalamin 5'-phosphate from adenosylcobinamide-GDP and alpha-ribazole 5'-phosphate. This is Adenosylcobinamide-GDP ribazoletransferase from Pseudomonas putida (strain W619).